Here is a 303-residue protein sequence, read N- to C-terminus: uncharacterized protein (303 aa).

The next 4 helical transmembrane spans lie at 102–122, 132–152, 184–204, and 221–241; these read TYLLSIIMMVLLCMLPSVMAI, FVLFDDIFILITFILIPFLFF, LLYFFFLLLWVPQGFLQSLIY, and FILLGIDLIFILFAIWNFLLF.

The protein localises to the membrane. This is an uncharacterized protein from Dictyostelium discoideum (Social amoeba).